The primary structure comprises 308 residues: Homeobox protein abdominal-A homolog (308 aa).

Positions 138–197 (RRRGRQTYTRFQTLELEKEFHFNHYLTRRRRIEIAHALCLTERQIKIWFQNRRMKLKKEL) form a DNA-binding region, homeobox. Residues 207–221 (ARREREEQDKMKNES) are compositionally biased toward basic and acidic residues. Positions 207–277 (ARREREEQDK…SGNLGSHLHH (71 aa)) are disordered. Residues 223-247 (KSAQQHHSQKQAQQEHTVVGSQQTS) are compositionally biased toward low complexity. Over residues 248-269 (NGGGTGGGTGGSGGAGSGGSSG) the composition is skewed to gly residues.

The protein belongs to the Antp homeobox family.

The protein localises to the nucleus. Sequence-specific transcription factor which is part of a developmental regulatory system that provides cells with specific positional identities on the anterior-posterior axis. This Anopheles gambiae (African malaria mosquito) protein is Homeobox protein abdominal-A homolog.